Consider the following 159-residue polypeptide: Transmembrane protein 42 (159 aa).

The next 4 helical transmembrane spans lie at 37–57 (FWGV…AASA), 59–79 (LAFG…VMAS), 100–120 (IASV…GYVL), and 124–144 (CQEV…TLIH).

The protein localises to the membrane. The sequence is that of Transmembrane protein 42 (TMEM42) from Pongo abelii (Sumatran orangutan).